We begin with the raw amino-acid sequence, 618 residues long: Sodium/iodide cotransporter (618 aa).

Residues 1-14 lie on the Extracellular side of the membrane; sequence MEGAEAGARATFGP. Residues 15–31 form a helical membrane-spanning segment; the sequence is WDYGVFATMLLVSTGIG. Residues 32–56 lie on the Cytoplasmic side of the membrane; the sequence is LWVGLARGGQRSADDFFTGGRQLAA. The discontinuously helical transmembrane segment at 57-80 threads the bilayer; the sequence is VPVGLSLAASFMSAVQVLGVPAEA. Positions 69, 71, and 72 each coordinate Na(+). Valine 76 serves as a coordination point for iodide. Topologically, residues 81 to 84 are extracellular; that stretch reads ARYG. A helical transmembrane segment spans residues 85–105; it reads LKFLWMCVGQLLNSLLTALLF. Methionine 90 is an iodide binding site. Over 106 to 130 the chain is Cytoplasmic; that stretch reads LPIFYRLGLTSTYQYLELRFSRAVR. A helical membrane pass occupies residues 131–157; it reads LCGTLQYLVATMLYTGIVIYAPALILN. Tyrosine 144 contacts Na(+). The Extracellular portion of the chain corresponds to 158-163; the sequence is QVTGLD. The chain crosses the membrane as a helical span at residues 164-181; it reads IWASLLSTGIICTLYTTV. Residues 182-189 are Cytoplasmic-facing; sequence GGMKAVVW. A helical transmembrane segment spans residues 190 to 208; sequence TDVFQVVVMLVGFWVILAR. Residues 209–243 lie on the Extracellular side of the membrane; the sequence is GVMLMGGPWNVLSLAQNHSRINLMDFDPDPRSRYT. A discontinuously helical transmembrane segment spans residues 244 to 266; the sequence is FWTFVVGGSLVWLSMYGVNQAQV. Tryptophan 255 serves as a coordination point for iodide. Position 258 (methionine 258) interacts with Na(+). Topologically, residues 267–278 are cytoplasmic; sequence QRYVACHTERKA. The helical transmembrane segment at 279–301 threads the bilayer; sequence KLALLVNQLGLFLIVASAACCGI. The Extracellular segment spans residues 302-335; the sequence is VMFVYYKDCDPLLTGRIAAPDQYMPLLVLDIFED. A helical membrane pass occupies residues 336-363; it reads LPGVPGLFLACAYSGTLSTASTSINAMA. Topologically, residues 364–386 are cytoplasmic; the sequence is AVTVEDLIKPRMPSLAPRKLVFI. Residues 387 to 408 form a helical membrane-spanning segment; the sequence is SKGLSFIYGSTCLTVAALSSLL. Over 409–411 the chain is Extracellular; sequence GGG. Residues 412–437 form a helical membrane-spanning segment; it reads VLQGSFTVMGVISGPLLGAFTLGMLL. Leucine 413 is an iodide binding site. Serine 416 and phenylalanine 417 together coordinate Na(+). Phenylalanine 417 lines the iodide pocket. The Cytoplasmic segment spans residues 438–441; that stretch reads PACN. The helical transmembrane segment at 442–465 threads the bilayer; it reads TPGVLSGLTAGLAVSLWVAVGATL. The Extracellular portion of the chain corresponds to 466-520; sequence YPPGEQTMGVLPTSAAGCTNASVLPSPPGAANTSRGIPSSGMDSGRPAFADTFYA. N-linked (GlcNAc...) asparagine glycosylation is found at asparagine 485 and asparagine 497. The chain crosses the membrane as a helical span at residues 521–545; it reads VSYLYYGALGTLTTMLCGALISYLT. The Cytoplasmic portion of the chain corresponds to 546-618; it reads GPTKRSSLGP…YLGHDVETNL (73 aa). Serine 551 carries the post-translational modification Phosphoserine; by PKA. Residues 571–587 show a composition bias toward basic and acidic residues; it reads PKEDTTTLEDSLVKGPE. The interval 571 to 618 is disordered; it reads PKEDTTTLEDSLVKGPEDIPAATKKPPGFRPEAETHPLYLGHDVETNL.

The protein belongs to the sodium:solute symporter (SSF) (TC 2.A.21) family. Monomer. In terms of processing, glycosylated.

The protein localises to the cell membrane. Its subcellular location is the cytoplasm. It catalyses the reaction iodide(out) + 2 Na(+)(out) = iodide(in) + 2 Na(+)(in). The catalysed reaction is chlorate(out) + 2 Na(+)(out) = chlorate(in) + 2 Na(+)(in). It carries out the reaction thiocyanate(out) + 2 Na(+)(out) = thiocyanate(in) + 2 Na(+)(in). The enzyme catalyses nitrate(out) + 2 Na(+)(out) = nitrate(in) + 2 Na(+)(in). It catalyses the reaction selenocyanate(out) + 2 Na(+)(out) = selenocyanate(in) + 2 Na(+)(in). Perchlorate inhibits iodide transport activity. Oxyanions inhibit iodide transport activity by blocking the binding sites for iodide and one of the sodium ions. In terms of biological role, sodium:iodide symporter that mediates the transport of iodide into the thyroid gland. Can also mediate the transport of chlorate, thiocynate, nitrate and selenocynate. The sequence is that of Sodium/iodide cotransporter (Slc5a5) from Mus musculus (Mouse).